Here is a 422-residue protein sequence, read N- to C-terminus: Gamma-glutamyl phosphate reductase (422 aa).

It belongs to the gamma-glutamyl phosphate reductase family.

It localises to the cytoplasm. It catalyses the reaction L-glutamate 5-semialdehyde + phosphate + NADP(+) = L-glutamyl 5-phosphate + NADPH + H(+). It participates in amino-acid biosynthesis; L-proline biosynthesis; L-glutamate 5-semialdehyde from L-glutamate: step 2/2. Catalyzes the NADPH-dependent reduction of L-glutamate 5-phosphate into L-glutamate 5-semialdehyde and phosphate. The product spontaneously undergoes cyclization to form 1-pyrroline-5-carboxylate. The polypeptide is Gamma-glutamyl phosphate reductase (Chloroflexus aurantiacus (strain ATCC 29366 / DSM 635 / J-10-fl)).